Here is an 88-residue protein sequence, read N- to C-terminus: UPF0297 protein Bcer98_3100 (88 aa).

Belongs to the UPF0297 family.

In Bacillus cytotoxicus (strain DSM 22905 / CIP 110041 / 391-98 / NVH 391-98), this protein is UPF0297 protein Bcer98_3100.